Reading from the N-terminus, the 109-residue chain is MKKTYRVKSDKDFQMIFSRGKNVANRKFVIYYLEKEQKHFRVGISVSKKLGNAVVRNAIKRKIRHVLLSQKTALQDYDFVVIARKGVEELDYQALEKNLIHVLKIAGLI.

This sequence belongs to the RnpA family. Consists of a catalytic RNA component (M1 or rnpB) and a protein subunit.

It carries out the reaction Endonucleolytic cleavage of RNA, removing 5'-extranucleotides from tRNA precursor.. Functionally, RNaseP catalyzes the removal of the 5'-leader sequence from pre-tRNA to produce the mature 5'-terminus. It can also cleave other RNA substrates such as 4.5S RNA. The protein component plays an auxiliary but essential role in vivo by binding to the 5'-leader sequence and broadening the substrate specificity of the ribozyme. The protein is Ribonuclease P protein component of Streptococcus agalactiae serotype Ia (strain ATCC 27591 / A909 / CDC SS700).